Reading from the N-terminus, the 421-residue chain is Accessory Sec system protein translocase subunit SecY2 (421 aa).

10 consecutive transmembrane segments (helical) span residues 17-37 (LWTS…IPGV), 69-89 (FALG…LTLI), 102-122 (TFLF…IAII), 139-159 (FGAM…LVWL), 165-185 (ILGI…NWPT), 204-224 (VILM…TVVV), 254-274 (PAGG…QYIL), 299-319 (PLGV…FAFI), 358-378 (SFVG…FGII), and 383-403 (TQYA…INII).

This sequence belongs to the SecY/SEC61-alpha family. SecY2 subfamily. Component of the accessory SecA2/SecY2 protein translocase complex required to export cell wall proteins. May form heterotrimers with SecE and SecG subunits.

Its subcellular location is the cell membrane. In terms of biological role, part of the accessory SecA2/SecY2 system specifically required for export of possible cell wall proteins. The central subunit of a protein translocation channel. This Leuconostoc gelidum subsp. gasicomitatum (strain DSM 15947 / CCUG 46042 / CECT 5767 / JCM 12535 / LMG 18811 / NBRC 113245 / TB1-10) (Leuconostoc gasicomitatum) protein is Accessory Sec system protein translocase subunit SecY2.